Reading from the N-terminus, the 172-residue chain is Small integral membrane protein 23 (172 aa).

Topologically, residues 1–36 (MATQQVDSRRQVAAEQVAAQLLERRRGSHCDDEKQT) are cytoplasmic. The helical; Signal-anchor for type II membrane protein transmembrane segment at 37–53 (LLALLILVLYLSTEIWG) threads the bilayer. Over 54-172 (SSWEVSERIR…LEISLSGAEL (119 aa)) the chain is Extracellular. Positions 96-128 (LKEKLHVFSEKLEEEVQQLEQLAWDLELWLDAL) form a coiled coil.

It localises to the cell membrane. The protein is Small integral membrane protein 23 (SMIM23) of Homo sapiens (Human).